The chain runs to 60 residues: Acidic phospholipase A2 (60 aa).

Ca(2+) contacts are provided by Tyr27, Gly29, and Gly31. Cys28 and Cys44 are disulfide-bonded. His47 is a catalytic residue. Asp48 serves as a coordination point for Ca(2+).

The protein belongs to the phospholipase A2 family. Group II subfamily. D49 sub-subfamily. In terms of assembly, monomer. Requires Ca(2+) as cofactor. In terms of tissue distribution, expressed by the venom gland.

Its subcellular location is the secreted. The catalysed reaction is a 1,2-diacyl-sn-glycero-3-phosphocholine + H2O = a 1-acyl-sn-glycero-3-phosphocholine + a fatty acid + H(+). Snake venom phospholipase A2 (PLA2) that exhibits an indirect hemolytic activity, a low myotoxicity, and induces edema. In addition, this enzyme has been shown to induce the release of some pro- and anti-inflammatory cytokines from human PBMC (IL12B, TNF-alpha, IL1B and IL6 but not variation has been observed for IL-8 and IL-10). PLA2 catalyzes the calcium-dependent hydrolysis of the 2-acyl groups in 3-sn-phosphoglycerides. This is Acidic phospholipase A2 from Bothrops leucurus (Whitetail lancehead).